The chain runs to 242 residues: MKIFNYKRVPYAEMRAFSVHILTASGSFLAFLGVVAAAEHRFIDMFWWLGLALLVDGIDGPIARKVRVKEVLPNWSGDTLDNIIDYVTYVLLPAFALYQSGMIGEPWSFVAAGMIVVSSAIYYADMGMKTDEYFFSGFPVVWNMIVFTLFVIDASATTALTVVIVSVVLTFLPINFLHPVRVKRLRPLNLGVFFLWSALGIFSLLMHFDTPEWALILFIVTGAYLYVIGAVLQFFPALGRET.

The Cytoplasmic segment spans residues 1 to 15 (MKIFNYKRVPYAEMR). Residues 16-36 (AFSVHILTASGSFLAFLGVVA) form a helical membrane-spanning segment. Topologically, residues 37–41 (AAEHR) are periplasmic. Residues 42-62 (FIDMFWWLGLALLVDGIDGPI) form a helical membrane-spanning segment. At 63–76 (ARKVRVKEVLPNWS) the chain is on the cytoplasmic side. A helical membrane pass occupies residues 77–97 (GDTLDNIIDYVTYVLLPAFAL). Topologically, residues 98–100 (YQS) are periplasmic. A helical membrane pass occupies residues 101–121 (GMIGEPWSFVAAGMIVVSSAI). The Cytoplasmic segment spans residues 122-133 (YYADMGMKTDEY). The helical transmembrane segment at 134-154 (FFSGFPVVWNMIVFTLFVIDA) threads the bilayer. Topologically, residues 155–159 (SATTA) are periplasmic. A helical transmembrane segment spans residues 160–180 (LTVVIVSVVLTFLPINFLHPV). The Cytoplasmic portion of the chain corresponds to 181 to 187 (RVKRLRP). The chain crosses the membrane as a helical span at residues 188-208 (LNLGVFFLWSALGIFSLLMHF). The Periplasmic portion of the chain corresponds to 209-214 (DTPEWA). The helical transmembrane segment at 215 to 235 (LILFIVTGAYLYVIGAVLQFF) threads the bilayer. Residues 236–242 (PALGRET) lie on the Cytoplasmic side of the membrane.

Belongs to the CDP-alcohol phosphatidyltransferase class-I family. It depends on Mn(2+) as a cofactor.

The protein resides in the cell inner membrane. It catalyses the reaction a CDP-1,2-diacyl-sn-glycerol + choline = a 1,2-diacyl-sn-glycero-3-phosphocholine + CMP + H(+). Condenses choline with CDP-diglyceride to produce phosphatidylcholine and CMP. The chain is Phosphatidylcholine synthase from Rhizobium johnstonii (strain DSM 114642 / LMG 32736 / 3841) (Rhizobium leguminosarum bv. viciae).